A 650-amino-acid chain; its full sequence is MLLTKREKHLLAAFQNYGKLSLKQMIDLLKVSQRTVYRTISDLTDSLNTINISIIKENQNYFLVGELANLASIISLDTYEQYERLNLITYKLLMSFSSITNEQLQEEFNVSNVTIIQDIAEIEKRLADFDLRLDRKKGYRLVGNKNTLRRLLAILLTNNLSISDFGAGAYGHFEVLDKAKLELAKQIFQSSQEDLPDLDAKMSEFFIILLALSGWRDNEAVGHSISKAALDFSQKVYTEFSQKTNQFYSIQEILYYASILDELVIKRQETPLFHEKFDSAFFYNISNLIDKVSLYTKINFAKDKTLFHFLFNHIRLNLAVPQIFEDKSNNTIAHEVVQGNEYLHRVVSLLVQDIFPKYLQKEPEYELITLHFASSLRRSPDIYPIKILLLTDERPLARELLITRIKTIAPFVDKVVVKELAQYETKDKDYYNCVLATKPLVDKAVKMVSTYPDAKEMLQLQDYLQNVQAHQKIIIRDEQTNKQGYNLQNYFLATQQLLQEFSYQEIDNPADFETSVPKIMETIAAVSDKTYLSSKLLKCFAVSPLAIPETHLALLHTQSSKVITSCFKIYDLKRPVTALSMNYEKETVTRILVMLTRLDETKEMRDLMTAISQSIIENHLYTEIYKTGNKDIIYQLLNQIFTEKIKKLET.

The PRD domain occupies 276–382; it reads KFDSAFFYNI…ASSLRRSPDI (107 aa). A PTS EIIA type-2 domain is found at 490–640; sequence YFLATQQLLQ…DIIYQLLNQI (151 aa). A Phosphohistidine; by HPr modification is found at H556.

Not necessary for mannitol utilization. May be involved in regulation of the mannitol phosphoenolpyruvate-dependent sugar phosphotransferase system (PTS). The protein is Putative transcriptional regulator MtlR (mtlR) of Streptococcus mutans serotype c (strain ATCC 700610 / UA159).